The following is a 200-amino-acid chain: Holliday junction branch migration complex subunit RuvA (200 aa).

The segment at 1–63 (MYAYVKGKLT…EDAQLLYGFS (63 aa)) is domain I. Residues 64 to 142 (SEEEKDMFLS…ITEEDSDSLL (79 aa)) form a domain II region. Residues 143-149 (QVDATST) are flexible linker. A domain III region spans residues 150-200 (VQDQFVQEAMLALEALGYSKRELAKVEKTLNKNKYDSVDEAVKAGLQLVVS).

This sequence belongs to the RuvA family. In terms of assembly, homotetramer. Forms an RuvA(8)-RuvB(12)-Holliday junction (HJ) complex. HJ DNA is sandwiched between 2 RuvA tetramers; dsDNA enters through RuvA and exits via RuvB. An RuvB hexamer assembles on each DNA strand where it exits the tetramer. Each RuvB hexamer is contacted by two RuvA subunits (via domain III) on 2 adjacent RuvB subunits; this complex drives branch migration. In the full resolvosome a probable DNA-RuvA(4)-RuvB(12)-RuvC(2) complex forms which resolves the HJ.

It localises to the cytoplasm. In terms of biological role, the RuvA-RuvB-RuvC complex processes Holliday junction (HJ) DNA during genetic recombination and DNA repair, while the RuvA-RuvB complex plays an important role in the rescue of blocked DNA replication forks via replication fork reversal (RFR). RuvA specifically binds to HJ cruciform DNA, conferring on it an open structure. The RuvB hexamer acts as an ATP-dependent pump, pulling dsDNA into and through the RuvAB complex. HJ branch migration allows RuvC to scan DNA until it finds its consensus sequence, where it cleaves and resolves the cruciform DNA. The chain is Holliday junction branch migration complex subunit RuvA from Staphylococcus aureus (strain USA300).